We begin with the raw amino-acid sequence, 292 residues long: ATP synthase gamma chain (292 aa).

The protein belongs to the ATPase gamma chain family. F-type ATPases have 2 components, CF(1) - the catalytic core - and CF(0) - the membrane proton channel. CF(1) has five subunits: alpha(3), beta(3), gamma(1), delta(1), epsilon(1). CF(0) has three main subunits: a, b and c.

It is found in the cell inner membrane. In terms of biological role, produces ATP from ADP in the presence of a proton gradient across the membrane. The gamma chain is believed to be important in regulating ATPase activity and the flow of protons through the CF(0) complex. This is ATP synthase gamma chain from Chlorobaculum parvum (strain DSM 263 / NCIMB 8327) (Chlorobium vibrioforme subsp. thiosulfatophilum).